A 271-amino-acid chain; its full sequence is D-methionine-binding lipoprotein MetQ (271 aa).

Residues Met1–Gly22 form the signal peptide. Cys23 carries the N-palmitoyl cysteine lipid modification. Residue Cys23 is the site of S-diacylglycerol cysteine attachment.

Belongs to the NlpA lipoprotein family.

The protein localises to the cell membrane. Functionally, this protein is a component of a D-methionine permease, a binding protein-dependent, ATP-driven transport system. The protein is D-methionine-binding lipoprotein MetQ (metQ) of Salmonella typhi.